The following is a 188-amino-acid chain: Succinate-acetate/proton symporter SatP (188 aa).

The Cytoplasmic portion of the chain corresponds to 1–13 (MGNTKLANPAPLG). The helical transmembrane segment at 14–34 (LMGFGMTTILLNLHNVGYFAL) threads the bilayer. Aspartate 35 is a topological domain (periplasmic). Residues 36 to 56 (GIILAMGIFYGGIAQIFAGLL) form a helical membrane-spanning segment. At 57 to 63 (EYKKGNT) the chain is on the cytoplasmic side. A helical membrane pass occupies residues 64 to 84 (FGLTAFTSYGSFWLTLVAILL). The Periplasmic portion of the chain corresponds to 85-97 (MPKLGLTDAPNAQ). A helical transmembrane segment spans residues 98-118 (FLGVYLGLWGVFTLFMFFGTL). Topologically, residues 119 to 122 (KGAR) are cytoplasmic. Residues 123 to 143 (VLQFVFFSLTVLFALLAIGNI) form a helical membrane-spanning segment. Residues 144–148 (AGNAA) lie on the Periplasmic side of the membrane. The helical transmembrane segment at 149-169 (IIHFAGWIGLICGASAIYLAM) threads the bilayer. The Cytoplasmic portion of the chain corresponds to 170–188 (GEVLNEQFGRTVLPIGESH).

Belongs to the acetate uptake transporter (AceTr) (TC 2.A.96) family.

It localises to the cell inner membrane. Its function is as follows. Uptake of acetate and succinate. Transport is energetically dependent on the protonmotive force. This chain is Succinate-acetate/proton symporter SatP (satP), found in Escherichia coli O157:H7.